We begin with the raw amino-acid sequence, 129 residues long: Tumor necrosis factor receptor superfamily member 12A (129 aa).

The N-terminal stretch at 1–27 (MARGSLRRLLRLLVLGLWLALLRSVAG) is a signal peptide. Residues 28-80 (EQAPGTAPCSRGSSWSADLDKCMDCASCRARPHSDFCLGCAAAPPAPFRLLWP) are Extracellular-facing. 3 cysteine pairs are disulfide-bonded: Cys-36–Cys-49, Cys-52–Cys-67, and Cys-55–Cys-64. Residues 36–67 (CSRGSSWSADLDKCMDCASCRARPHSDFCLGC) form a TNFR-Cys; atypical repeat. The helical transmembrane segment at 81-101 (ILGGALSLTFVLGLLSGFLVW) threads the bilayer. Topologically, residues 102–129 (RRCRRREKFTTPIEETGGEGCPAVALIQ) are cytoplasmic.

In terms of assembly, associates with TRAF1 and TRAF2, and probably also with TRAF3. In terms of tissue distribution, highly expressed in heart, placenta and kidney. Intermediate expression in lung, skeletal muscle and pancreas.

The protein resides in the membrane. Functionally, receptor for TNFSF12/TWEAK. Weak inducer of apoptosis in some cell types. Promotes angiogenesis and the proliferation of endothelial cells. May modulate cellular adhesion to matrix proteins. The protein is Tumor necrosis factor receptor superfamily member 12A (TNFRSF12A) of Homo sapiens (Human).